A 436-amino-acid chain; its full sequence is Trigger factor (436 aa).

Residues 161–246 (GDQVNIDFVG…VNSVAAPQLP (86 aa)) enclose the PPIase FKBP-type domain.

This sequence belongs to the FKBP-type PPIase family. Tig subfamily.

The protein localises to the cytoplasm. The enzyme catalyses [protein]-peptidylproline (omega=180) = [protein]-peptidylproline (omega=0). Its function is as follows. Involved in protein export. Acts as a chaperone by maintaining the newly synthesized protein in an open conformation. Functions as a peptidyl-prolyl cis-trans isomerase. The polypeptide is Trigger factor (Stutzerimonas stutzeri (strain A1501) (Pseudomonas stutzeri)).